The sequence spans 194 residues: Probable GTP-binding protein EngB (194 aa).

The region spanning Gly-22–Met-194 is the EngB-type G domain. GTP contacts are provided by residues Gly-30–Ser-37, Gly-57–Thr-61, Asp-75–Gly-78, Thr-142–Asp-145, and Phe-175–Ser-177. Mg(2+) is bound by residues Ser-37 and Thr-59.

This sequence belongs to the TRAFAC class TrmE-Era-EngA-EngB-Septin-like GTPase superfamily. EngB GTPase family. Mg(2+) serves as cofactor.

Functionally, necessary for normal cell division and for the maintenance of normal septation. This chain is Probable GTP-binding protein EngB, found in Leuconostoc citreum (strain KM20).